The primary structure comprises 732 residues: MSEHSRCPVTGRTAGNPVAGGGIANRDWWPNQLHLDMLHQHSSLSNPMEEAFKYKEEFGKLDLKAVKKDLYTLMTDSQEWWPADYGHYGGLFIRMTWHSAGTYRTGDGRGGGGTGNQRFAPLNSWPDNANLDKARRLLWPIKQKYGKKLSWADLMILAGNYALESMGFKTFGFGGGRVDIWEPEEDIYWGKEVEWLDNKRYSGERDLENPLAAVQMGLIYVNPEGPDGKPDPVAAGKDIRETFGRMAMNDEETVALVAGGHTFGKCHGVGDPKLVGPEPEAADIEEQGLGWKSGYGSGKGDETMTSGLEGAWTPDPIHWDMGYLGMLFKYEWELTKSPAGAWQWKPTDVAEEDLAPAAHDPSKRVPTMMTTADLAMRMDPIYGPISRRYYEHPDQFADAFARAWFKLTHRDMGPKSRYLGTEVPEEDLIWQDPVPAVDHELIGDREIAELKKRLLASGLSIPELVSTAWASASTFRGSDKRGGANGARIRLAPQKDWEVNQPEQLKIVLQKLEEIRQEFNDAQSGGKRVSLADLIVLGGCAGVEEAARKAGTDVTIPFTPGRTDASQEQTDTESFAVLEPLADGFRNYMKKKYSVSAEEMLVDRSQLLTLTAPEMTVLVGGLRVLNVNFGQSPHGVFTTLPETLTNDFFVNLLDMGTEWKPLSKEHDTFEGRDRKTGEPRWTATRVDLIFGSNSRLRAIAEVYGSDNAQEKFVHDFVAAWNKVMNLDRFELG.

A cross-link (tryptophyl-tyrosyl-methioninium (Trp-Tyr) (with M-246)) is located at residues 97–220 (WHSAGTYRTG…LAAVQMGLIY (124 aa)). The active-site Proton acceptor is His-98. The segment at residues 220 to 246 (YVNPEGPDGKPDPVAAGKDIRETFGRM) is a cross-link (tryptophyl-tyrosyl-methioninium (Tyr-Met) (with W-97)). His-261 lines the heme b pocket.

This sequence belongs to the peroxidase family. Peroxidase/catalase subfamily. As to quaternary structure, homodimer or homotetramer. The cofactor is heme b. Post-translationally, formation of the three residue Trp-Tyr-Met cross-link is important for the catalase, but not the peroxidase activity of the enzyme.

It carries out the reaction H2O2 + AH2 = A + 2 H2O. It catalyses the reaction 2 H2O2 = O2 + 2 H2O. In terms of biological role, bifunctional enzyme with both catalase and broad-spectrum peroxidase activity. This chain is Catalase-peroxidase, found in Chlorobium phaeobacteroides (strain BS1).